The primary structure comprises 194 residues: Imidazoleglycerol-phosphate dehydratase (194 aa).

The protein belongs to the imidazoleglycerol-phosphate dehydratase family.

Its subcellular location is the cytoplasm. The enzyme catalyses D-erythro-1-(imidazol-4-yl)glycerol 3-phosphate = 3-(imidazol-4-yl)-2-oxopropyl phosphate + H2O. Its pathway is amino-acid biosynthesis; L-histidine biosynthesis; L-histidine from 5-phospho-alpha-D-ribose 1-diphosphate: step 6/9. The chain is Imidazoleglycerol-phosphate dehydratase from Clostridium kluyveri (strain NBRC 12016).